The primary structure comprises 233 residues: B-cell lymphoma/leukemia 10 (233 aa).

N-acetylmethionine is present on Met1. In terms of domain architecture, CARD spans 13-101 (LTEVKKDALE…QNFLIQKITD (89 aa)). Glycyl lysine isopeptide (Lys-Gly) (interchain with G-Cter in ubiquitin) cross-links involve residues Lys17, Lys31, and Lys63. Phosphoserine is present on Ser138. The interval 187–233 (FSSTTLPRPGDPGAPPLPPDLQLEEEGTCANSSEMFLPLRSRTVSRQ) is disordered. Positions 195–205 (PGDPGAPPLPP) are enriched in pro residues.

Homomultimer; homooligomerized following recruitment by CARD domain-containing proteins that form a nucleating helical template that recruits BCL10 via CARD-CARD interaction. Self-associates by CARD-CARD interaction and interacts with other CARD-proteins such as CARD9, CARD10, CARD11 and CARD14. Forms a complex with CARD14 and MALT1; resulting in the formation of a CBM (CARD14-BCL10-MALT1) complex. Forms a complex with CARD11 and MALT1; resulting in the formation of a CBM (CARD11-BCL10-MALT1) complex. Forms a complex with CARD9 and MALT1; resulting in the formation of a CBM (CARD9-BCL10-MALT1) complex. Found in a membrane raft complex, at least composed of BCL10, CARD11, DPP4 and IKBKB. Binds caspase-9 with its C-terminal domain. Interacts with TRAF2 and BIRC2/c-IAP2. Interacts with PELI2 and SOCS3; these interactions may be mutually exclusive. Phosphorylated. Phosphorylation results in dissociation from TRAF2 and binding to BIRC2/c-IAP2. Phosphorylated by IKBKB/IKKB. In terms of processing, ubiquitinated via both 'Lys-63'-linked and linear ('Met-1'-linked) polyubiquitin chains in response to T-cell receptor (TCR) activation. Ubiquitination is recognized by IKBKG/NEMO, the regulatory subunit of I-kappa-B kinase (IKK), and is required for TCR-induced NF-kappa-B activation. Linear ubiquitination at Lys-17, Lys-31 and Lys-63 is mediated by RNF31/HOIP; linear ubiquitination is recognized with much higher affinity than 'Lys-63'-linked ubiquitin by IKBKG/NEMO. CARD11 is required for linear ubiquitination by HOIP by promoting the targeting of BCL10 to RNF31/HOIP. Post-translationally, proteolytically cleaved by MALT1; required for T-cell activation. Ubiquitous.

The protein localises to the cytoplasm. It localises to the perinuclear region. The protein resides in the membrane raft. Plays a key role in both adaptive and innate immune signaling by bridging CARD domain-containing proteins to immune activation. Acts by channeling adaptive and innate immune signaling downstream of CARD domain-containing proteins CARD9, CARD11 and CARD14 to activate NF-kappa-B and MAP kinase p38 (MAPK11, MAPK12, MAPK13 and/or MAPK14) pathways which stimulate expression of genes encoding pro-inflammatory cytokines and chemokines. Recruited by activated CARD domain-containing proteins: homooligomerized CARD domain-containing proteins form a nucleating helical template that recruits BCL10 via CARD-CARD interaction, thereby promoting polymerization of BCL10, subsequent recruitment of MALT1 and formation of a CBM complex. This leads to activation of NF-kappa-B and MAP kinase p38 (MAPK11, MAPK12, MAPK13 and/or MAPK14) pathways which stimulate expression of genes encoding pro-inflammatory cytokines and chemokines. Activated by CARD9 downstream of C-type lectin receptors; CARD9-mediated signals are essential for antifungal immunity. Activated by CARD11 downstream of T-cell receptor (TCR) and B-cell receptor (BCR). Promotes apoptosis, pro-caspase-9 maturation and activation of NF-kappa-B via NIK and IKK. In Homo sapiens (Human), this protein is B-cell lymphoma/leukemia 10.